Consider the following 97-residue polypeptide: Large ribosomal subunit protein uL23 (97 aa).

The protein belongs to the universal ribosomal protein uL23 family. In terms of assembly, part of the 50S ribosomal subunit. Contacts protein L29, and trigger factor when it is bound to the ribosome.

One of the early assembly proteins it binds 23S rRNA. One of the proteins that surrounds the polypeptide exit tunnel on the outside of the ribosome. Forms the main docking site for trigger factor binding to the ribosome. The protein is Large ribosomal subunit protein uL23 of Limosilactobacillus fermentum (strain NBRC 3956 / LMG 18251) (Lactobacillus fermentum).